The primary structure comprises 178 residues: Lipid A deacylase PagL (178 aa).

The N-terminal stretch at 1–19 (MQFLKKNKPLFGIVTLALA) is a signal peptide. Residues H154, S156, and D168 each act as charge relay system in the active site.

It belongs to the PagL family. As to quaternary structure, homodimer.

Its subcellular location is the cell outer membrane. It catalyses the reaction a 3-(acyloxy)acyl derivative of bacterial toxin + H2O = a 3-hydroxyacyl derivative of bacterial toxin + a fatty acid + H(+). Its function is as follows. Has lipid A 3-O-deacylase activity. Hydrolyzes the ester bond at the 3 position of lipid A, a bioactive component of lipopolysaccharide (LPS), thereby releasing the primary fatty acyl moiety. This Bordetella bronchiseptica (strain ATCC BAA-588 / NCTC 13252 / RB50) (Alcaligenes bronchisepticus) protein is Lipid A deacylase PagL.